Consider the following 130-residue polypeptide: MIHCKVQQWSPQYLRLPATGYEELTLTLNTSMLARMPEEEDQLFLVVGDSPSSTYVDWGEDCNSTRYPSYDHCTHKILYLGASAGTTRSKRLSATIGIRLSKGTGSNNVLGTPMYLLYNEMKTRIIESSK.

The catalysed reaction is [trehalose-6-phosphate synthase]-L-cysteine + S-adenosyl-L-methionine = [trehalose-6-phosphate synthase]-S-methyl-L-cysteine + S-adenosyl-L-homocysteine + H(+). Functionally, S-adenosyl-L-methionine-dependent protein-cysteine S-methyltransferase with broad substrate specificity. Methylates trehalose-6-phosphate synthase (TPS), enhancing its enzymatic activity and promoting trehalose synthesis upon entry of cells into stationary phase. The sequence is that of Cysteine methyltransferase from Saccharomyces cerevisiae (Baker's yeast).